Reading from the N-terminus, the 802-residue chain is Endoplasmin (802 aa).

The first 21 residues, 1–21 (MRVLWVLGLCCVLLTFGFVRA), serve as a signal peptide directing secretion. The SRT pseudosubstrate motif motif lies at 42–44 (SRT). Residue N62 is glycosylated (N-linked (GlcNAc...) asparagine). S64 carries the post-translational modification Phosphoserine. N107 is a glycosylation site (N-linked (GlcNAc...) asparagine). 3 residues coordinate ATP: N107, D149, and N162. K168 carries the N6-(2-hydroxyisobutyryl)lysine modification. The residue at position 172 (S172) is a Phosphoserine. F199 is an ATP binding site. N217 carries N-linked (GlcNAc...) asparagine glycosylation. The segment covering 290-317 (EEPLEEDEAAKEEKEESDDEAAVEEEEE) has biased composition (acidic residues). Positions 290–323 (EEPLEEDEAAKEEKEESDDEAAVEEEEEEKKPKT) are disordered. Phosphoserine is present on residues S306 and S403. The residue at position 404 (K404) is an N6-succinyllysine. N445 carries N-linked (GlcNAc...) asparagine glycosylation. S447 is modified (phosphoserine). K479 is subject to N6-acetyllysine. Residues N481 and N502 are each glycosylated (N-linked (GlcNAc...) asparagine). K633 bears the N6-succinyllysine mark. Residues 749 to 802 (IDPEAQVEEEPEEEPEDTSEDAEDSEQDEGEEMDAGTEEEEEETEKESTEKDEL) are disordered. Positions 753–793 (AQVEEEPEEEPEDTSEDAEDSEQDEGEEMDAGTEEEEEETE) are enriched in acidic residues. Residue T785 is modified to Phosphothreonine. Residues 799-802 (KDEL) carry the Prevents secretion from ER motif.

The protein belongs to the heat shock protein 90 family. As to quaternary structure, homodimer; disulfide-linked. Component of an EIF2 complex at least composed of CELF1/CUGBP1, CALR, CALR3, EIF2S1, EIF2S2, HSP90B1 and HSPA5. Part of a large chaperone multiprotein complex comprising DNAJB11, HSP90B1, HSPA5, HYOU, PDIA2, PDIA4, PDIA6, PPIB, SDF2L1, UGGT1 and very small amounts of ERP29, but not, or at very low levels, CALR nor CANX. Hyperglycosylated form interacts with OS9; promoting its degradation by the endoplasmic reticulum associated degradation (ERAD). Interacts with AIMP1; regulates its retention in the endoplasmic reticulum. Interacts with CNPY3; this interaction is disrupted in the presence of ATP. Interacts with TLR4, TLR9 and TLR11, but not with TLR3. Interacts with MZB1 in a calcium-dependent manner. Interacts with METTL23. Interacts with IL1B; the interaction facilitates cargo translocation into the ERGIC. Interacts with EIF2AK3. Post-translationally, phosphorylated by CK2. In terms of processing, N-glycosylated cotranslationally at Asn-217 by STT3A-containing OST-A complex: this glycosylation is constitutive. In response to various stress, 5 additional facultative sites (Asn-62, Asn-107, Asn-445, Asn-481 and Asn-502) can be glycosylated post-translationally by STT3B-containing OST-B complex, leading to a hyperglycosylated form that is degraded by the ER-associated degradation (ERAD) pathway. In normal conditions, the OST-A complex together with CCDC134 prevent glycosylation at facultative sites during protein folding, thereby preventing hyperglycosylation. Mechanistically, nascent HSP90B1 is tethered during translation to a specialized CCDC134-containing translocon that forms a microenvironment for its folding, in which STT3A associates with the SRT pseudosubstrate motif, and prevents access to facultative glycosylation sites until folding is completed, rendering its facultative sites inaccessible to the OST-B complex.

Its subcellular location is the endoplasmic reticulum lumen. It localises to the sarcoplasmic reticulum lumen. It is found in the melanosome. It catalyses the reaction ATP + H2O = ADP + phosphate + H(+). Functionally, ATP-dependent chaperone involved in the processing of proteins in the endoplasmic reticulum, regulating their transport. Together with MESD, acts as a modulator of the Wnt pathway by promoting the folding of LRP6, a coreceptor of the canonical Wnt pathway. When associated with CNPY3, required for proper folding of Toll-like receptors. Promotes folding and trafficking of TLR4 to the cell surface. May participate in the unfolding of cytosolic leaderless cargos (lacking the secretion signal sequence) such as the interleukin 1/IL-1 to facilitate their translocation into the ERGIC (endoplasmic reticulum-Golgi intermediate compartment) and secretion; the translocation process is mediated by the cargo receptor TMED10. The polypeptide is Endoplasmin (Hsp90b1) (Mus musculus (Mouse)).